The following is a 331-amino-acid chain: MKFGIEFVPNEPIQKLCYYVKLAEDNGFEYCWITDHYNNRNVYMALTAIAMNTNKIKLGPGVTNPYVRSPAITASAIATLDELSGGRAVLGIGPGDKATFDALGIEWVKPVTTLKESIEVIRKLLAGERVSYEGKVVKIAGAALAVKPIQKAVPVYMGAQGPKMLETAGMIADGVLINASNPKDFEAAIPLIKKGAEAAGRSMDEIDVAAYACMSVDKNADKAKQAAVPVVAFIAAGSPPVVLERHGIDMEKVEAIRNALKSGNFPEAFKNVDDTMLEAFSIYGTPEDVVEKCKKLAEMGVTQIVAGSPIGPNKETAIKLIGKKVIPALKE.

It belongs to the mer family.

Its subcellular location is the cytoplasm. The catalysed reaction is 5-methyl-5,6,7,8-tetrahydromethanopterin + oxidized coenzyme F420-(gamma-L-Glu)(n) + H(+) = 5,10-methylenetetrahydromethanopterin + reduced coenzyme F420-(gamma-L-Glu)(n). Its pathway is one-carbon metabolism; methanogenesis from CO(2); methyl-coenzyme M from 5,10-methylene-5,6,7,8-tetrahydromethanopterin: step 1/2. In terms of biological role, catalyzes the reversible reduction of methylene-H(4)MPT to methyl-H(4)MPT. The polypeptide is 5,10-methylenetetrahydromethanopterin reductase (Methanocaldococcus jannaschii (strain ATCC 43067 / DSM 2661 / JAL-1 / JCM 10045 / NBRC 100440) (Methanococcus jannaschii)).